The sequence spans 372 residues: Envelope phospholipase OPG057 (372 aa).

A YPPL motif is present at residues 153–156; it reads YPPL. 2 S-palmitoyl cysteine; by host lipidation sites follow: Cys185 and Cys186. The 28-residue stretch at 307–334 folds into the PLD phosphodiesterase domain; it reads FTIQNNTKLLIVDDEYVHITSANFDGTH.

Belongs to the orthopoxvirus OPG057 family. As to quaternary structure, interacts with protein OPG190/B5. Palmitoylated. Attachment of the palmitate moiety is essential for correct intracellular targeting and protein function.

Its subcellular location is the virion membrane. It is found in the host Golgi apparatus. The protein localises to the host trans-Golgi network. The protein resides in the host endoplasmic reticulum membrane. It catalyses the reaction a 1,2-diacyl-sn-glycero-3-phosphocholine + H2O = a 1,2-diacyl-sn-glycero-3-phosphate + choline + H(+). Functionally, major envelope protein that plays a role in the biogenesis of the viral double membrane and in egress of virus from the host cell. Produces the wrapped form of virus that is required for cell-to-cell spread. Acts as a lipase with broad specificity including phospholipase C, phospholipase A, and triacylglycerol lipase activities. This Vaccinia virus (strain Western Reserve) (VACV) protein is Envelope phospholipase OPG057 (OPG057).